We begin with the raw amino-acid sequence, 352 residues long: Trifunctional sesterterpene/triterpene/sesquarterpene synthase (352 aa).

This sequence belongs to the large terpene synthase family.

The catalysed reaction is (2E,6E,10E,14E)-geranylfarnesyl diphosphate = beta-geranylfarnesene + diphosphate. It carries out the reaction all-trans-hexaprenyl diphosphate = beta-hexaprene + diphosphate. It catalyses the reaction all-trans-heptaprenyl diphosphate = beta-heptaprene + diphosphate. Catalyzes the conversion of geranylfarnesyl diphosphate (GFPP) and hexaprenyl diphosphate (HexPP) into beta-geranylfarnesene and beta-hexaprene, respectively. Also produces beta-heptaprene from heptaprenyl diphosphate (HepPP) as a minor product. The sequence is that of Trifunctional sesterterpene/triterpene/sesquarterpene synthase from Shouchella clausii (Alkalihalobacillus clausii).